Consider the following 146-residue polypeptide: Leghemoglobin 1 (146 aa).

One can recognise a Globin domain in the interval 2 to 146; the sequence is GFTAQQDALV…LAAAIKKAMS (145 aa). Phosphoserine; by CCAMK is present on residues S13 and S14. Y30 is modified (nitrated tyrosine). S45 and S55 each carry phosphoserine; by CCAMK. S45 lines the heme b pocket. An O2-binding site is contributed by H61. Heme b is bound by residues K64, H93, and K96. At S123 the chain carries Phosphoserine; by CCAMK. The residue at position 134 (Y134) is a Nitrated tyrosine.

This sequence belongs to the plant globin family. As to quaternary structure, monomer. In terms of processing, nitrated in effective nodules and particularly in hypoxic conditions; this mechanism may play a protective role in the symbiosis by buffering toxic peroxynitrite NO(2)(-). Nitration level decrease during nodule senescence. Phosphorylated by CCAMK at serine residues in a Ca(2+)-dependent manner; the phosphorylation at Ser-45 disrupts the molecular environment of its porphyrin ring oxygen binding pocket, thus leading to a reduced oxygen consumption and to the delivery of oxygen O(2) to symbiosomes. In terms of tissue distribution, specifically and strongly expressed in root nodules and at low levels in seedlings.

It localises to the cytoplasm. The protein localises to the cytosol. The protein resides in the nucleus. Leghemoglobin that reversibly binds oxygen O(2) through a pentacoordinated heme iron. In root nodules, facilitates the diffusion of oxygen to the bacteroids while preventing the bacterial nitrogenase from being inactivated by buffering dioxygen, nitric oxide and carbon monoxide, and promoting the formation of reactive oxygen species (ROS, e.g. H(2)O(2)). This role is essential for symbiotic nitrogen fixation (SNF). This is Leghemoglobin 1 from Lotus japonicus (Lotus corniculatus var. japonicus).